The chain runs to 273 residues: NH(3)-dependent NAD(+) synthetase (273 aa).

47-54 (GISGGQDS) provides a ligand contact to ATP. Position 53 (Asp53) interacts with Mg(2+). Arg139 serves as a coordination point for deamido-NAD(+). Thr159 is a binding site for ATP. Glu164 is a binding site for Mg(2+). Deamido-NAD(+)-binding residues include Lys172 and Asp179. Lys188 and Thr210 together coordinate ATP. 259–260 (HK) serves as a coordination point for deamido-NAD(+).

It belongs to the NAD synthetase family. As to quaternary structure, homodimer.

It carries out the reaction deamido-NAD(+) + NH4(+) + ATP = AMP + diphosphate + NAD(+) + H(+). It participates in cofactor biosynthesis; NAD(+) biosynthesis; NAD(+) from deamido-NAD(+) (ammonia route): step 1/1. Catalyzes the ATP-dependent amidation of deamido-NAD to form NAD. Uses ammonia as a nitrogen source. The chain is NH(3)-dependent NAD(+) synthetase from Staphylococcus aureus (strain bovine RF122 / ET3-1).